The following is a 206-amino-acid chain: uncharacterized protein (206 aa).

In terms of domain architecture, YrdC-like spans 14 to 200 (QRLINQAVEI…TPVVVREGVG (187 aa)).

Belongs to the SUA5 family.

This is an uncharacterized protein from Escherichia coli O6:H1 (strain CFT073 / ATCC 700928 / UPEC).